Here is a 261-residue protein sequence, read N- to C-terminus: Putative hydro-lyase SAR11_0660 (261 aa).

Belongs to the D-glutamate cyclase family.

The sequence is that of Putative hydro-lyase SAR11_0660 from Pelagibacter ubique (strain HTCC1062).